Here is a 396-residue protein sequence, read N- to C-terminus: tRNA-specific 2-thiouridylase MnmA (396 aa).

ATP-binding positions include 11 to 18 and M37; that span reads GLSGGVDS. Residues 97-99 are interaction with target base in tRNA; the sequence is NPD. C102 (nucleophile) is an active-site residue. Residues C102 and C225 are joined by a disulfide bond. Residue G126 participates in ATP binding. The segment at 175–177 is interaction with tRNA; it reads KDQ. C225 serves as the catalytic Cysteine persulfide intermediate. Residues 343–344 form an interaction with tRNA region; the sequence is RY.

The protein belongs to the MnmA/TRMU family.

Its subcellular location is the cytoplasm. The enzyme catalyses S-sulfanyl-L-cysteinyl-[protein] + uridine(34) in tRNA + AH2 + ATP = 2-thiouridine(34) in tRNA + L-cysteinyl-[protein] + A + AMP + diphosphate + H(+). Functionally, catalyzes the 2-thiolation of uridine at the wobble position (U34) of tRNA, leading to the formation of s(2)U34. This chain is tRNA-specific 2-thiouridylase MnmA, found in Methylibium petroleiphilum (strain ATCC BAA-1232 / LMG 22953 / PM1).